A 205-amino-acid chain; its full sequence is Dephospho-CoA kinase (205 aa).

The DPCK domain occupies 4-204 (VVGLTGGIAS…QYYLTLATQQ (201 aa)). 12–17 (ASGKTT) contacts ATP.

This sequence belongs to the CoaE family.

The protein localises to the cytoplasm. The catalysed reaction is 3'-dephospho-CoA + ATP = ADP + CoA + H(+). Its pathway is cofactor biosynthesis; coenzyme A biosynthesis; CoA from (R)-pantothenate: step 5/5. Functionally, catalyzes the phosphorylation of the 3'-hydroxyl group of dephosphocoenzyme A to form coenzyme A. This is Dephospho-CoA kinase from Haemophilus ducreyi (strain 35000HP / ATCC 700724).